A 246-amino-acid polypeptide reads, in one-letter code: Acetoacetate decarboxylase (246 aa).

K115 (schiff-base intermediate with acetoacetate) is an active-site residue.

It belongs to the ADC family.

The catalysed reaction is acetoacetate + H(+) = acetone + CO2. Catalyzes the conversion of acetoacetate to acetone and carbon dioxide. The chain is Acetoacetate decarboxylase from Clostridium beijerinckii (Clostridium MP).